Reading from the N-terminus, the 47-residue chain is PhoP/PhoQ regulator MgrB (47 aa).

Residues 6-26 (WVILIIVALVCLLLWAQVFNI) form a helical membrane-spanning segment.

It belongs to the MgrB family. As to quaternary structure, may form homooligomers. Probably interacts with the periplasmic domain of PhoQ.

It is found in the cell inner membrane. Its function is as follows. PhoP-regulated transcription is redox-sensitive, being activated when the periplasm becomes more reducing. MgrB acts between DsbA/DsbB and PhoP/PhoQ in this pathway. Represses PhoP/PhoQ signaling, possibly by binding to the periplasmic domain of PhoQ, altering its activity and that of downstream effector PhoP. In Citrobacter koseri (strain ATCC BAA-895 / CDC 4225-83 / SGSC4696), this protein is PhoP/PhoQ regulator MgrB.